The following is a 429-amino-acid chain: Glutamate-1-semialdehyde 2,1-aminomutase (429 aa).

Residue K267 is modified to N6-(pyridoxal phosphate)lysine.

This sequence belongs to the class-III pyridoxal-phosphate-dependent aminotransferase family. HemL subfamily. As to quaternary structure, homodimer. Pyridoxal 5'-phosphate is required as a cofactor.

The protein localises to the cytoplasm. It catalyses the reaction (S)-4-amino-5-oxopentanoate = 5-aminolevulinate. It participates in porphyrin-containing compound metabolism; protoporphyrin-IX biosynthesis; 5-aminolevulinate from L-glutamyl-tRNA(Glu): step 2/2. This chain is Glutamate-1-semialdehyde 2,1-aminomutase, found in Stenotrophomonas maltophilia (strain K279a).